Consider the following 280-residue polypeptide: MKYIGAHVSASGGVENAVLRAVEIGANAFALFTKNQRQWKAPALKADTIEKFKRFCKAHQFSPEHILPHDSYLINLGNPEAENLAKSREAFIDEMERANQLGLKLLNFHPGAHLNKISESECLARIAESINIAVDKVPNVIAVIENTAGQGSNLGYRFEHLAEIIDQVEDKNRVGVCLDTCHLFSAGYDISSLESCEQTFSEFERTVGFQYLRGMHLNGSKTPLGSRVDRHHTLREGTIGTDFCKFIMQDDRFDNIPLILETIQPEIWTEEIKFLRTLAK.

Residues H69, H109, E145, D179, H182, H216, D229, H231, and E261 each coordinate Zn(2+).

It belongs to the AP endonuclease 2 family. Zn(2+) serves as cofactor.

It carries out the reaction Endonucleolytic cleavage to 5'-phosphooligonucleotide end-products.. Functionally, endonuclease IV plays a role in DNA repair. It cleaves phosphodiester bonds at apurinic or apyrimidinic (AP) sites, generating a 3'-hydroxyl group and a 5'-terminal sugar phosphate. The protein is Probable endonuclease 4 of Actinobacillus pleuropneumoniae serotype 7 (strain AP76).